The following is a 141-amino-acid chain: HTH-type transcriptional regulator LrpA (141 aa).

An HTH asnC-type domain is found at 2–63; sequence IDERDKIILE…RINPKKLGYS (62 aa). The segment at residues 21–40 is a DNA-binding region (H-T-H motif); that stretch reads FTEIAKKLGISETAVRKRVK.

In terms of assembly, homooctamer; tetramer of dimers.

Functionally, DNA-binding protein that negatively regulates its own transcription. Interferes with RNA polymerase (RNAP) recruitment by inhibiting the association of RNAP with the TBP-TFB promoter complex. In Pyrococcus horikoshii (strain ATCC 700860 / DSM 12428 / JCM 9974 / NBRC 100139 / OT-3), this protein is HTH-type transcriptional regulator LrpA (lrpA).